Here is a 449-residue protein sequence, read N- to C-terminus: Glutamyl-tRNA reductase (449 aa).

Substrate is bound by residues 48-51 (TCNR), S99, 104-106 (EDQ), and Q110. C49 functions as the Nucleophile in the catalytic mechanism. 179–184 (GAGEIG) contacts NADP(+).

This sequence belongs to the glutamyl-tRNA reductase family. In terms of assembly, homodimer.

The enzyme catalyses (S)-4-amino-5-oxopentanoate + tRNA(Glu) + NADP(+) = L-glutamyl-tRNA(Glu) + NADPH + H(+). Its pathway is porphyrin-containing compound metabolism; protoporphyrin-IX biosynthesis; 5-aminolevulinate from L-glutamyl-tRNA(Glu): step 1/2. In terms of biological role, catalyzes the NADPH-dependent reduction of glutamyl-tRNA(Glu) to glutamate 1-semialdehyde (GSA). This Methanosarcina barkeri (strain Fusaro / DSM 804) protein is Glutamyl-tRNA reductase.